Reading from the N-terminus, the 273-residue chain is Formamidopyrimidine-DNA glycosylase (273 aa).

The active-site Schiff-base intermediate with DNA is the Pro-2. Glu-3 acts as the Proton donor in catalysis. Lys-58 serves as the catalytic Proton donor; for beta-elimination activity. Residues His-92, Arg-111, and Lys-153 each contribute to the DNA site. An FPG-type zinc finger spans residues 238 to 272; the sequence is MVYARDGQECLSCSSSIIKTKHSGRSTFYCKSCQK. The active-site Proton donor; for delta-elimination activity is Arg-262.

Belongs to the FPG family. In terms of assembly, monomer. The cofactor is Zn(2+).

The enzyme catalyses Hydrolysis of DNA containing ring-opened 7-methylguanine residues, releasing 2,6-diamino-4-hydroxy-5-(N-methyl)formamidopyrimidine.. It catalyses the reaction 2'-deoxyribonucleotide-(2'-deoxyribose 5'-phosphate)-2'-deoxyribonucleotide-DNA = a 3'-end 2'-deoxyribonucleotide-(2,3-dehydro-2,3-deoxyribose 5'-phosphate)-DNA + a 5'-end 5'-phospho-2'-deoxyribonucleoside-DNA + H(+). Involved in base excision repair of DNA damaged by oxidation or by mutagenic agents. Acts as a DNA glycosylase that recognizes and removes damaged bases. Has a preference for oxidized purines, such as 7,8-dihydro-8-oxoguanine (8-oxoG). Has AP (apurinic/apyrimidinic) lyase activity and introduces nicks in the DNA strand. Cleaves the DNA backbone by beta-delta elimination to generate a single-strand break at the site of the removed base with both 3'- and 5'-phosphates. The protein is Formamidopyrimidine-DNA glycosylase of Rickettsia bellii (strain OSU 85-389).